The primary structure comprises 425 residues: UDP-N-acetylglucosamine 1-carboxyvinyltransferase (425 aa).

Phosphoenolpyruvate is bound at residue 23–24 (KN). Position 100 (arginine 100) interacts with UDP-N-acetyl-alpha-D-glucosamine. The Proton donor role is filled by cysteine 124. Cysteine 124 carries the post-translational modification 2-(S-cysteinyl)pyruvic acid O-phosphothioketal. 2 residues coordinate UDP-N-acetyl-alpha-D-glucosamine: aspartate 313 and isoleucine 335.

This sequence belongs to the EPSP synthase family. MurA subfamily.

The protein resides in the cytoplasm. It carries out the reaction phosphoenolpyruvate + UDP-N-acetyl-alpha-D-glucosamine = UDP-N-acetyl-3-O-(1-carboxyvinyl)-alpha-D-glucosamine + phosphate. It functions in the pathway cell wall biogenesis; peptidoglycan biosynthesis. Cell wall formation. Adds enolpyruvyl to UDP-N-acetylglucosamine. The sequence is that of UDP-N-acetylglucosamine 1-carboxyvinyltransferase from Wolbachia sp. subsp. Brugia malayi (strain TRS).